A 138-amino-acid polypeptide reads, in one-letter code: Acidic phospholipase A2 ammodytin I1 (138 aa).

The first 16 residues, 1–16 (MRILWIVAVCLIGAEG), serve as a signal peptide directing secretion. Disulfide bonds link Cys42–Cys131, Cys44–Cys60, Cys59–Cys111, Cys65–Cys138, Cys66–Cys104, Cys73–Cys97, and Cys91–Cys102. Residues Tyr43, Gly45, and Gly47 each coordinate Ca(2+). His63 is a catalytic residue. Asp64 contributes to the Ca(2+) binding site. Asp105 is an active-site residue.

This sequence belongs to the phospholipase A2 family. Group II subfamily. D49 sub-subfamily. Ca(2+) is required as a cofactor. As to expression, expressed by the venom gland.

It localises to the secreted. It carries out the reaction a 1,2-diacyl-sn-glycero-3-phosphocholine + H2O = a 1-acyl-sn-glycero-3-phosphocholine + a fatty acid + H(+). Functionally, snake venom phospholipase A2 (PLA2) that has enzymatic activity but is non-toxic. PLA2 catalyzes the calcium-dependent hydrolysis of the 2-acyl groups in 3-sn-phosphoglycerides. The protein is Acidic phospholipase A2 ammodytin I1 of Vipera ammodytes ammodytes (Western sand viper).